Here is a 249-residue protein sequence, read N- to C-terminus: Probable transcriptional regulatory protein ERGA_CDS_03720 (249 aa).

The interval 1–21 is disordered; the sequence is MAGHSQFANIKHRKGAQDAKR.

It belongs to the TACO1 family.

It localises to the cytoplasm. The protein is Probable transcriptional regulatory protein ERGA_CDS_03720 of Ehrlichia ruminantium (strain Gardel).